A 397-amino-acid polypeptide reads, in one-letter code: Riboflavin biosynthesis protein RibBA (397 aa).

Residues 1 to 199 (MFHRIEEALE…IEDLIAYRRH (199 aa)) are DHBP synthase. Residues 26–27 (RE), Asp-31, 138–142 (RAGHT), and Glu-162 each bind D-ribulose 5-phosphate. Residue Glu-27 participates in Mg(2+) binding. Residue His-141 coordinates Mg(2+). The interval 200-397 (HETFVTKEVE…VTKLGHLLNL (198 aa)) is GTP cyclohydrolase II. 250 to 254 (RVHSE) serves as a coordination point for GTP. Zn(2+)-binding residues include Cys-255, Cys-266, and Cys-268. GTP is bound by residues Gln-271, 293 to 295 (EGR), and Thr-315. Residue Asp-327 is the Proton acceptor; for GTP cyclohydrolase activity of the active site. The active-site Nucleophile; for GTP cyclohydrolase activity is the Arg-329. The GTP site is built by Thr-350 and Lys-355.

It in the N-terminal section; belongs to the DHBP synthase family. The protein in the C-terminal section; belongs to the GTP cyclohydrolase II family. Mg(2+) serves as cofactor. It depends on Mn(2+) as a cofactor. Requires Zn(2+) as cofactor.

It catalyses the reaction D-ribulose 5-phosphate = (2S)-2-hydroxy-3-oxobutyl phosphate + formate + H(+). The catalysed reaction is GTP + 4 H2O = 2,5-diamino-6-hydroxy-4-(5-phosphoribosylamino)-pyrimidine + formate + 2 phosphate + 3 H(+). It participates in cofactor biosynthesis; riboflavin biosynthesis; 2-hydroxy-3-oxobutyl phosphate from D-ribulose 5-phosphate: step 1/1. The protein operates within cofactor biosynthesis; riboflavin biosynthesis; 5-amino-6-(D-ribitylamino)uracil from GTP: step 1/4. Catalyzes the conversion of D-ribulose 5-phosphate to formate and 3,4-dihydroxy-2-butanone 4-phosphate. In terms of biological role, catalyzes the conversion of GTP to 2,5-diamino-6-ribosylamino-4(3H)-pyrimidinone 5'-phosphate (DARP), formate and pyrophosphate. This chain is Riboflavin biosynthesis protein RibBA, found in Bacillus cytotoxicus (strain DSM 22905 / CIP 110041 / 391-98 / NVH 391-98).